A 260-amino-acid polypeptide reads, in one-letter code: MVLKELRQKRPLVHNITNYVAAQFVANGLLALGASPLMSDAIDEMQDLAKISDALAINIGTINERAILCAKEAIKHYKALNKPIVLDPVGCSASALRHDTSLELLKSGGISALRGNAAELGSLVGISCESKGLDSQDANTPVEIIKRVAQKYFVIAVMTGKTDYVSDGKKVLSITGGSEYLALITGAGCLHTAACASFLGLKKDPLDSMAQLCALYKQASFNAQKKALENNGSNGSFLFYFLDALSLPIKLENSLIKEVL.

A substrate-binding site is contributed by M38. ATP is bound by residues R114 and T159. Substrate is bound at residue G186.

This sequence belongs to the Thz kinase family. It depends on Mg(2+) as a cofactor.

It carries out the reaction 5-(2-hydroxyethyl)-4-methylthiazole + ATP = 4-methyl-5-(2-phosphooxyethyl)-thiazole + ADP + H(+). Its pathway is cofactor biosynthesis; thiamine diphosphate biosynthesis; 4-methyl-5-(2-phosphoethyl)-thiazole from 5-(2-hydroxyethyl)-4-methylthiazole: step 1/1. Catalyzes the phosphorylation of the hydroxyl group of 4-methyl-5-beta-hydroxyethylthiazole (THZ). This chain is Hydroxyethylthiazole kinase, found in Helicobacter pylori (strain HPAG1).